The primary structure comprises 248 residues: Tabserin (248 aa).

The first 19 residues, 1–19 (MLKYSALFLYLIYVGGSES), serve as a signal peptide directing secretion. The region spanning 24–248 (IVGGVPVAEE…PYFENGLRKR (225 aa)) is the Peptidase S1 domain. Cysteine 49 and cysteine 65 are oxidised to a cystine. Catalysis depends on charge relay system residues histidine 64 and aspartate 111. 2 disulfides stabilise this stretch: cysteine 175/cysteine 189 and cysteine 201/cysteine 226. The active-site Charge relay system is the serine 205.

The protein belongs to the peptidase S1 family. As to expression, expressed in salivary glands.

It localises to the secreted. Its function is as follows. Serine protease that inhibits blood coagulation in a dose-dependent manner. May act by destroying coagulant factors to inhibit blood coagulation. This Tabanus yao (Horsefly) protein is Tabserin.